Reading from the N-terminus, the 164-residue chain is Peroxynitrite isomerase (164 aa).

The short motif at 21 to 27 is the GXWXGXG element; it reads GRWGGRG. Residues Lys-130 and His-156 each coordinate heme b.

This sequence belongs to the nitrobindin family. Homodimer. Heme b is required as a cofactor.

The catalysed reaction is peroxynitrite = nitrate. Its pathway is nitrogen metabolism. Functionally, heme-binding protein able to scavenge peroxynitrite and to protect free L-tyrosine against peroxynitrite-mediated nitration, by acting as a peroxynitrite isomerase that converts peroxynitrite to nitrate. Therefore, this protein likely plays a role in peroxynitrite sensing and in the detoxification of reactive nitrogen and oxygen species (RNS and ROS, respectively). Is able to bind nitric oxide (NO) in vitro, but may act as a sensor of peroxynitrite levels in vivo. This Nocardioides sp. (strain ATCC BAA-499 / JS614) protein is Peroxynitrite isomerase.